The chain runs to 78 residues: Metallothionein-like protein type 2 (78 aa).

It belongs to the metallothionein superfamily. Type 15 family.

Metallothioneins have a high content of cysteine residues that bind various heavy metals. This chain is Metallothionein-like protein type 2, found in Musa acuminata (Banana).